Consider the following 367-residue polypeptide: 3-dehydroquinate synthase (367 aa).

NAD(+) contacts are provided by residues 69 to 74 (DGEAFK), 103 to 107 (GVVGD), 127 to 128 (TT), Lys140, Lys149, and 167 to 170 (TLAT). Positions 182, 245, and 262 each coordinate Zn(2+).

It belongs to the sugar phosphate cyclases superfamily. Dehydroquinate synthase family. The cofactor is Co(2+). Requires Zn(2+) as cofactor. NAD(+) is required as a cofactor.

It is found in the cytoplasm. It catalyses the reaction 7-phospho-2-dehydro-3-deoxy-D-arabino-heptonate = 3-dehydroquinate + phosphate. It functions in the pathway metabolic intermediate biosynthesis; chorismate biosynthesis; chorismate from D-erythrose 4-phosphate and phosphoenolpyruvate: step 2/7. Functionally, catalyzes the conversion of 3-deoxy-D-arabino-heptulosonate 7-phosphate (DAHP) to dehydroquinate (DHQ). This Azotobacter vinelandii (strain DJ / ATCC BAA-1303) protein is 3-dehydroquinate synthase.